Reading from the N-terminus, the 415-residue chain is FXa-directed anticoagulant (415 aa).

A signal peptide spans 1–17 (MYLKIVILVTFPLVCFT). N-linked (GlcNAc...) asparagine glycans are attached at residues asparagine 117, asparagine 166, asparagine 216, and asparagine 320.

This sequence belongs to the serpin family. As to quaternary structure, (Microbial infection) Interacts with Zika virus envelope protein E and Zika virus-like particles; the interaction does not affect Zika virus replication in human endothelial cells and keratinocytes. Post-translationally, the N-terminus is blocked. As to expression, female salivary gland (at protein level). Not detected in female carcass without head and salivary glands. Not detected in male tissues.

It is found in the secreted. Its function is as follows. Anticoagulant serpin-type protein inhibiting host coagulation factor Xa (F10). Does not inhibit host thrombin (F2) and trypsin. Functionally, (Microbial infection) Does not affect Zika virus replication in human endothelial cells and keratinocytes. This is FXa-directed anticoagulant from Aedes aegypti (Yellowfever mosquito).